We begin with the raw amino-acid sequence, 250 residues long: MSGHSKWATIKRKKAATDQKRGKLFTKLVKEITISARMGGGDPDGNPRLRLAIENARANSMPAENIKRAVQRGTGEIDGANYEEISYEGYGPGGIAVIIEAATDNRNRTVAEVRHIMSRSGGSLGESGSVSWMFQRKGSISIAKSLASEEQLMELLLEAGLEDLKTDDEDYFSVLTDVKDLESAKKALEAAKIAYEDAKIDMIPDNTIELDGEDAEKALKMVDALEDNDDVQMVYTNMEISESALEKLNQ.

It belongs to the TACO1 family.

The protein resides in the cytoplasm. The sequence is that of Probable transcriptional regulatory protein Ctha_1786 from Chloroherpeton thalassium (strain ATCC 35110 / GB-78).